The chain runs to 366 residues: Carbamoyl phosphate synthase small chain (366 aa).

The interval 1-171 (MQSKRYLVLE…KTPYVSTGKD (171 aa)) is CPSase. Residues Ser47, Gly221, and Gly223 each coordinate L-glutamine. A Glutamine amidotransferase type-1 domain is found at 173-360 (SVVLVDFGKK…VAMMTNFKEK (188 aa)). Cys248 (nucleophile) is an active-site residue. The L-glutamine site is built by Leu249, Gln252, Asn290, Gly292, and Tyr293. Catalysis depends on residues His333 and Glu335.

This sequence belongs to the CarA family. As to quaternary structure, composed of two chains; the small (or glutamine) chain promotes the hydrolysis of glutamine to ammonia, which is used by the large (or ammonia) chain to synthesize carbamoyl phosphate. Tetramer of heterodimers (alpha,beta)4.

The enzyme catalyses hydrogencarbonate + L-glutamine + 2 ATP + H2O = carbamoyl phosphate + L-glutamate + 2 ADP + phosphate + 2 H(+). The catalysed reaction is L-glutamine + H2O = L-glutamate + NH4(+). The protein operates within amino-acid biosynthesis; L-arginine biosynthesis; carbamoyl phosphate from bicarbonate: step 1/1. It functions in the pathway pyrimidine metabolism; UMP biosynthesis via de novo pathway; (S)-dihydroorotate from bicarbonate: step 1/3. Its function is as follows. Small subunit of the glutamine-dependent carbamoyl phosphate synthetase (CPSase). CPSase catalyzes the formation of carbamoyl phosphate from the ammonia moiety of glutamine, carbonate, and phosphate donated by ATP, constituting the first step of 2 biosynthetic pathways, one leading to arginine and/or urea and the other to pyrimidine nucleotides. The small subunit (glutamine amidotransferase) binds and cleaves glutamine to supply the large subunit with the substrate ammonia. This Staphylococcus aureus (strain COL) protein is Carbamoyl phosphate synthase small chain.